Consider the following 127-residue polypeptide: Urotensin-2 (127 aa).

The first 16 residues, 1-16 (MSKLFFCCLILAGSFC), serve as a signal peptide directing secretion. Positions 17 to 111 (SFRSLPIIVP…RLQSKDRKQF (95 aa)) are excised as a propeptide. Cys-121 and Cys-126 are disulfide-bonded.

This sequence belongs to the urotensin-2 family. In terms of tissue distribution, central nervous system. Spinal cord.

The protein resides in the secreted. Its function is as follows. Involved in smooth muscle stimulating and ion mobilizing activities. It has a suggested role as a corticotropin-releasing factor. The chain is Urotensin-2 (UTS2) from Pelophylax ridibundus (Marsh frog).